The chain runs to 267 residues: Glucosamine-6-phosphate deaminase (267 aa).

Asp72 acts as the Proton acceptor; for enolization step in catalysis. Residue Asp141 is the For ring-opening step of the active site. His143 acts as the Proton acceptor; for ring-opening step in catalysis. The For ring-opening step role is filled by Glu148.

This sequence belongs to the glucosamine/galactosamine-6-phosphate isomerase family. NagB subfamily. As to quaternary structure, homohexamer.

The catalysed reaction is alpha-D-glucosamine 6-phosphate + H2O = beta-D-fructose 6-phosphate + NH4(+). Its pathway is amino-sugar metabolism; N-acetylneuraminate degradation; D-fructose 6-phosphate from N-acetylneuraminate: step 5/5. With respect to regulation, allosterically activated by N-acetylglucosamine 6-phosphate (GlcNAc6P). In terms of biological role, catalyzes the reversible isomerization-deamination of glucosamine 6-phosphate (GlcN6P) to form fructose 6-phosphate (Fru6P) and ammonium ion. The polypeptide is Glucosamine-6-phosphate deaminase (Pasteurella multocida (strain Pm70)).